The primary structure comprises 449 residues: Cytochrome P450 2E1 (449 aa).

Substrate is bound at residue F254 to T259. C393 contacts heme.

It belongs to the cytochrome P450 family. As to quaternary structure, interacts with chaperones HSP70 and HSP90; this interaction is required for initial targeting to mitochondria. Heme serves as cofactor.

It is found in the endoplasmic reticulum membrane. Its subcellular location is the microsome membrane. The protein localises to the mitochondrion inner membrane. The enzyme catalyses an organic molecule + reduced [NADPH--hemoprotein reductase] + O2 = an alcohol + oxidized [NADPH--hemoprotein reductase] + H2O + H(+). The catalysed reaction is (5Z,8Z,11Z)-eicosatrienoate + reduced [NADPH--hemoprotein reductase] + O2 = 19-hydroxy-(5Z,8Z,11Z)-eicosatrienoate + oxidized [NADPH--hemoprotein reductase] + H2O + H(+). It carries out the reaction (5Z,8Z,11Z,14Z,17Z)-eicosapentaenoate + reduced [NADPH--hemoprotein reductase] + O2 = 19-hydroxy-(5Z,8Z,11Z,14Z,17Z)-eicosapentaenoate + oxidized [NADPH--hemoprotein reductase] + H2O + H(+). It catalyses the reaction (4Z,7Z,10Z,13Z,16Z,19Z)-docosahexaenoate + reduced [NADPH--hemoprotein reductase] + O2 = 21-hydroxy-(4Z,7Z,10Z,13Z,16Z,19Z)-docosahexaenoate + oxidized [NADPH--hemoprotein reductase] + H2O + H(+). The enzyme catalyses dodecanoate + reduced [NADPH--hemoprotein reductase] + O2 = 11-hydroxydodecanoate + oxidized [NADPH--hemoprotein reductase] + H2O + H(+). The catalysed reaction is tetradecanoate + reduced [NADPH--hemoprotein reductase] + O2 = 13-hydroxytetradecanoate + oxidized [NADPH--hemoprotein reductase] + H2O + H(+). It carries out the reaction 4-nitrophenol + NADPH + O2 + H(+) = 4-nitrocatechol + NADP(+) + H2O. The protein operates within lipid metabolism; fatty acid metabolism. With respect to regulation, the omega-1 hydroxylase activity is stimulated by cytochrome b5. Its function is as follows. A cytochrome P450 monooxygenase involved in the metabolism of fatty acids. Mechanistically, uses molecular oxygen inserting one oxygen atom into a substrate, and reducing the second into a water molecule, with two electrons provided by NADPH via cytochrome P450 reductase (NADPH--hemoprotein reductase). Catalyzes the hydroxylation of carbon-hydrogen bonds. Hydroxylates fatty acids specifically at the omega-1 position displaying the highest catalytic activity for saturated fatty acids. May be involved in the oxidative metabolism of xenobiotics. This chain is Cytochrome P450 2E1 (CYP2E1), found in Macaca fascicularis (Crab-eating macaque).